Reading from the N-terminus, the 215-residue chain is Adenylate kinase (215 aa).

10–15 (GAGKGT) lines the ATP pocket. The NMP stretch occupies residues 30–59 (STGDILRENVKNQTELGKKAKEYMDKGLLV). Residues Thr31, Arg36, 57-59 (LLV), 85-88 (GFPR), and Gln92 contribute to the AMP site. The tract at residues 126–163 (GRRICKSCGASFHVVYRPPKKEGICDICGGQLYQREDD) is LID. Arg127 contacts ATP. Cys130 and Cys133 together coordinate Zn(2+). 136–137 (SF) lines the ATP pocket. Cys150 and Cys153 together coordinate Zn(2+). Residues Arg160 and Arg171 each coordinate AMP. Glu199 lines the ATP pocket.

This sequence belongs to the adenylate kinase family. Monomer.

The protein localises to the cytoplasm. It catalyses the reaction AMP + ATP = 2 ADP. Its pathway is purine metabolism; AMP biosynthesis via salvage pathway; AMP from ADP: step 1/1. Functionally, catalyzes the reversible transfer of the terminal phosphate group between ATP and AMP. Plays an important role in cellular energy homeostasis and in adenine nucleotide metabolism. This Caldicellulosiruptor saccharolyticus (strain ATCC 43494 / DSM 8903 / Tp8T 6331) protein is Adenylate kinase.